A 388-amino-acid polypeptide reads, in one-letter code: LL-diaminopimelate aminotransferase (388 aa).

Residues tyrosine 13, glycine 38, lysine 102, tyrosine 126, and asparagine 176 each contribute to the substrate site. Pyridoxal 5'-phosphate contacts are provided by residues 101 to 102 (SK), tyrosine 126, asparagine 176, tyrosine 207, and 235 to 237 (SLS). Position 238 is an N6-(pyridoxal phosphate)lysine (lysine 238). Arginine 246 contacts pyridoxal 5'-phosphate. Arginine 364 contributes to the substrate binding site.

Belongs to the class-I pyridoxal-phosphate-dependent aminotransferase family. LL-diaminopimelate aminotransferase subfamily. In terms of assembly, homodimer. Requires pyridoxal 5'-phosphate as cofactor.

It carries out the reaction (2S,6S)-2,6-diaminopimelate + 2-oxoglutarate = (S)-2,3,4,5-tetrahydrodipicolinate + L-glutamate + H2O + H(+). It functions in the pathway amino-acid biosynthesis; L-lysine biosynthesis via DAP pathway; LL-2,6-diaminopimelate from (S)-tetrahydrodipicolinate (aminotransferase route): step 1/1. Functionally, involved in the synthesis of meso-diaminopimelate (m-DAP or DL-DAP), required for both lysine and peptidoglycan biosynthesis. Catalyzes the direct conversion of tetrahydrodipicolinate to LL-diaminopimelate. The protein is LL-diaminopimelate aminotransferase of Dehalococcoides mccartyi (strain CBDB1).